The following is a 204-amino-acid chain: Thymidylate kinase (204 aa).

Position 9–16 (9–16 (GLDGAGKS)) interacts with ATP.

This sequence belongs to the thymidylate kinase family.

The catalysed reaction is dTMP + ATP = dTDP + ADP. Phosphorylation of dTMP to form dTDP in both de novo and salvage pathways of dTTP synthesis. The protein is Thymidylate kinase of Francisella philomiragia subsp. philomiragia (strain ATCC 25017 / CCUG 19701 / FSC 153 / O#319-036).